Consider the following 258-residue polypeptide: Cytochrome b-c1 complex subunit Rieske-1, mitochondrial (258 aa).

The N-terminal 46 residues, 1-46, are a transit peptide targeting the mitochondrion; sequence WPVRSAAPSSSAFISANHFSSDDDSSSPRSISPSLASVFLHHTRGF. Over 47–95 the chain is Mitochondrial matrix; the sequence is SSNSVSPAHDMGLVPDLPPTVAAIKNPTSKIVYDEHNHERYPPGDPSKR. Residues 96 to 118 form a helical membrane-spanning segment; the sequence is AFAYFVLTGGRFVYASLMRLLIL. The Mitochondrial intermembrane segment spans residues 119–258; sequence KFVLSMSASK…FLEENKLLIG (140 aa). The region spanning 161-256 is the Rieske domain; that stretch reads RRRTEDDISL…YSFLEENKLL (96 aa). Cys-201, His-203, Cys-220, and His-223 together coordinate [2Fe-2S] cluster. Residues Cys-206 and Cys-222 are joined by a disulfide bond.

It belongs to the Rieske iron-sulfur protein family. Component of the ubiquinol-cytochrome c oxidoreductase (cytochrome b-c1 complex, complex III, CIII), a multisubunit enzyme composed of 3 respiratory subunits cytochrome b, cytochrome c1 and Rieske protein, 2 core protein subunits, and several low-molecular weight protein subunits. The complex exists as an obligatory dimer and forms supercomplexes (SCs) in the inner mitochondrial membrane with cytochrome c oxidase (complex IV, CIV). It depends on [2Fe-2S] cluster as a cofactor.

Its subcellular location is the mitochondrion inner membrane. It carries out the reaction a quinol + 2 Fe(III)-[cytochrome c](out) = a quinone + 2 Fe(II)-[cytochrome c](out) + 2 H(+)(out). Component of the ubiquinol-cytochrome c oxidoreductase, a multisubunit transmembrane complex that is part of the mitochondrial electron transport chain which drives oxidative phosphorylation. The respiratory chain contains 3 multisubunit complexes succinate dehydrogenase (complex II, CII), ubiquinol-cytochrome c oxidoreductase (cytochrome b-c1 complex, complex III, CIII) and cytochrome c oxidase (complex IV, CIV), that cooperate to transfer electrons derived from NADH and succinate to molecular oxygen, creating an electrochemical gradient over the inner membrane that drives transmembrane transport and the ATP synthase. The cytochrome b-c1 complex catalyzes electron transfer from ubiquinol to cytochrome c, linking this redox reaction to translocation of protons across the mitochondrial inner membrane, with protons being carried across the membrane as hydrogens on the quinol. In the process called Q cycle, 2 protons are consumed from the matrix, 4 protons are released into the intermembrane space and 2 electrons are passed to cytochrome c. The Rieske protein is a catalytic core subunit containing a [2Fe-2S] iron-sulfur cluster. It cycles between 2 conformational states during catalysis to transfer electrons from the quinol bound in the Q(0) site in cytochrome b to cytochrome c1. In Nicotiana tabacum (Common tobacco), this protein is Cytochrome b-c1 complex subunit Rieske-1, mitochondrial.